The primary structure comprises 519 residues: Polyamine aminopropyltransferase (519 aa).

The next 7 membrane-spanning stretches (helical) occupy residues 17–37, 53–73, 86–106, 109–129, 158–178, 180–200, and 208–228; these read LLLVSVAICAASGLVYELALV, LIVAGYVAALGVGAILVKPFL, LLGLIGGLSALVLYMTFAVVG, LWMLVLATALIGILVGAELPL, LGALLGGLAWPFILLPWLGMM, GAAAAGMINLLAALFVGCVLL, and QFIRAVVALLVAIAVLGTVLV. Residues 200–463 are spermidine synthase; sequence LRHLLPRAQF…FQLCGPEGTE (264 aa). In terms of domain architecture, PABS spans 225–459; it reads TVLVRSDGIV…GDWGFQLCGP (235 aa). Residue Gln255 coordinates S-methyl-5'-thioadenosine. Asp307 lines the spermidine pocket. S-methyl-5'-thioadenosine is bound by residues Glu326 and 358 to 359; that span reads DA. The Proton acceptor role is filled by Asp379.

It belongs to the spermidine/spermine synthase family. As to quaternary structure, homodimer or homotetramer.

It localises to the cell membrane. It catalyses the reaction S-adenosyl 3-(methylsulfanyl)propylamine + putrescine = S-methyl-5'-thioadenosine + spermidine + H(+). Its pathway is amine and polyamine biosynthesis; spermidine biosynthesis; spermidine from putrescine: step 1/1. Catalyzes the irreversible transfer of a propylamine group from the amino donor S-adenosylmethioninamine (decarboxy-AdoMet) to putrescine (1,4-diaminobutane) to yield spermidine. In Corynebacterium efficiens (strain DSM 44549 / YS-314 / AJ 12310 / JCM 11189 / NBRC 100395), this protein is Polyamine aminopropyltransferase.